We begin with the raw amino-acid sequence, 80 residues long: Cell division protein ZapB (80 aa).

The stretch at 3-80 (FEVLEKLEAK…ALLGKMEDVE (78 aa)) forms a coiled coil.

Belongs to the ZapB family. In terms of assembly, homodimer. The ends of the coiled-coil dimer bind to each other, forming polymers. Interacts with FtsZ.

The protein localises to the cytoplasm. In terms of biological role, non-essential, abundant cell division factor that is required for proper Z-ring formation. It is recruited early to the divisome by direct interaction with FtsZ, stimulating Z-ring assembly and thereby promoting cell division earlier in the cell cycle. Its recruitment to the Z-ring requires functional FtsA or ZipA. This is Cell division protein ZapB from Vibrio vulnificus (strain CMCP6).